We begin with the raw amino-acid sequence, 327 residues long: Methionyl-tRNA formyltransferase (327 aa).

Residue 121–124 (SLLP) participates in (6S)-5,6,7,8-tetrahydrofolate binding.

The protein belongs to the Fmt family.

The catalysed reaction is L-methionyl-tRNA(fMet) + (6R)-10-formyltetrahydrofolate = N-formyl-L-methionyl-tRNA(fMet) + (6S)-5,6,7,8-tetrahydrofolate + H(+). Attaches a formyl group to the free amino group of methionyl-tRNA(fMet). The formyl group appears to play a dual role in the initiator identity of N-formylmethionyl-tRNA by promoting its recognition by IF2 and preventing the misappropriation of this tRNA by the elongation apparatus. In Burkholderia vietnamiensis (strain G4 / LMG 22486) (Burkholderia cepacia (strain R1808)), this protein is Methionyl-tRNA formyltransferase.